Here is a 485-residue protein sequence, read N- to C-terminus: MVFSSNVFLFLFLPIFLGLYYLSGQRYRNLLLLVASYIFYAWWRVDFLALFAGVTLWNYWIGLKVGAAGVRTKPAQRWLLLGVGVDLAILGYFKYANFGVDSLNAIMTSFGLEPFILTHVLLPIGISFYIFESISYIIDVYRGDTPATRNLIDFAAFVAIFPHLIAGPVLRFKDLVDQFNNRTHTLDKFSEGCTRFMQGFIKKVFIADTLAVVADHCFALQNPTTGDAWLGALAYTAQLYFDFSGYSDMAIGLGLMMGFRFMENFKQPYISQSITEFWRRWHISLSTWLRDYLYITLGGNRKGTFNTYRNLFLTMLLGGLWHGANFTYIIWGAWHGMWLAIERALGLDTNPQRFNPVKWAFTFLLVVVGWVIFRAENLHVAARMYGAMFSFGDWQLSELNRAQLTGLQVATLVIAYLTLAFFGLRDFYRNARPTPKATPVQVNADGSIGLDWTRVMTRALILLLFVASILKLSAQSYSPFLYFQF.

The next 9 membrane-spanning stretches (helical) occupy residues 7-24 (VFLFLFLPIFLGLYYLSG), 39-61 (FYAWWRVDFLALFAGVTLWNYWI), 78-100 (WLLLGVGVDLAILGYFKYANFGV), 115-137 (FILTHVLLPIGISFYIFESISYI), 150-172 (NLIDFAAFVAIFPHLIAGPVLRF), 312-334 (FLTMLLGGLWHGANFTYIIWGAW), 360-382 (AFTFLLVVVGWVIFRAENLHVAA), 402-424 (AQLTGLQVATLVIAYLTLAFFGL), and 461-483 (ILLLFVASILKLSAQSYSPFLYF). His322 is a catalytic residue.

Belongs to the membrane-bound acyltransferase family.

It localises to the cell inner membrane. Its pathway is glycan biosynthesis; alginate biosynthesis. Functionally, together with AlgJ and AlgF, forms an inner membrane complex which probably interacts with the alginate polymerization-transport complex and adds acetyl groups at the O-2 and O-3 positions of mannuronate residues. Acetylation of alginate is important for the architecture of biofilms and increases the ability of alginate to act as a defense barrier. The polypeptide is Probable alginate O-acetylase AlgI (algI) (Pseudomonas putida (strain ATCC 47054 / DSM 6125 / CFBP 8728 / NCIMB 11950 / KT2440)).